We begin with the raw amino-acid sequence, 151 residues long: Putative pre-16S rRNA nuclease (151 aa).

Belongs to the YqgF nuclease family.

It is found in the cytoplasm. Could be a nuclease involved in processing of the 5'-end of pre-16S rRNA. This is Putative pre-16S rRNA nuclease from Paraburkholderia phymatum (strain DSM 17167 / CIP 108236 / LMG 21445 / STM815) (Burkholderia phymatum).